The sequence spans 98 residues: DNA-binding protein Fis (98 aa).

A DNA-binding region (H-T-H motif) is located at residues 74–93 (QTRAATMMGINRGTLRKKLK).

It belongs to the transcriptional regulatory Fis family. In terms of assembly, homodimer.

Its function is as follows. Activates ribosomal RNA transcription. Plays a direct role in upstream activation of rRNA promoters. This Photobacterium profundum (strain SS9) protein is DNA-binding protein Fis.